A 482-amino-acid polypeptide reads, in one-letter code: Cytochrome c-552 (482 aa).

Positions 1-26 are cleaved as a signal peptide; that stretch reads MIKVSNALQRILIGAALALFGGGAQA. His98 contributes to the heme c binding site. Heme is bound by residues Cys126, Cys129, and Lys130. 6 residues coordinate heme c: Cys164, Cys167, His168, Cys213, Cys216, and His217. Positions 219, 220, 265, and 267 each coordinate Ca(2+). Tyr220 is a substrate binding site. Residue His268 coordinates substrate. Residues His279, Cys286, Cys289, His290, His305, Cys318, Cys321, His322, and His397 each coordinate heme c.

The protein belongs to the cytochrome c-552 family. Ca(2+) serves as cofactor. The cofactor is heme c.

The protein localises to the periplasm. The enzyme catalyses 6 Fe(III)-[cytochrome c] + NH4(+) + 2 H2O = 6 Fe(II)-[cytochrome c] + nitrite + 8 H(+). Its pathway is nitrogen metabolism; nitrate reduction (assimilation). In terms of biological role, catalyzes the reduction of nitrite to ammonia, consuming six electrons in the process. The sequence is that of Cytochrome c-552 from Edwardsiella ictaluri (strain 93-146).